The chain runs to 217 residues: High frequency lysogenization protein HflD homolog (217 aa).

Belongs to the HflD family.

Its subcellular location is the cytoplasm. It is found in the cell membrane. The chain is High frequency lysogenization protein HflD homolog from Buchnera aphidicola subsp. Baizongia pistaciae (strain Bp).